The following is a 276-amino-acid chain: Large ribosomal subunit protein uL2 (276 aa).

The disordered stretch occupies residues 219–276 (TVRGSVMNPNDHPHGGGEGRSPIGRPSPVTPWGKPALGYKTRKKNKASNKLIVSRRTK). Positions 258–276 (KTRKKNKASNKLIVSRRTK) are enriched in basic residues.

It belongs to the universal ribosomal protein uL2 family. As to quaternary structure, part of the 50S ribosomal subunit. Forms a bridge to the 30S subunit in the 70S ribosome.

One of the primary rRNA binding proteins. Required for association of the 30S and 50S subunits to form the 70S ribosome, for tRNA binding and peptide bond formation. It has been suggested to have peptidyltransferase activity; this is somewhat controversial. Makes several contacts with the 16S rRNA in the 70S ribosome. The polypeptide is Large ribosomal subunit protein uL2 (Clostridioides difficile (strain 630) (Peptoclostridium difficile)).